The primary structure comprises 236 residues: Peroxisomal coenzyme A diphosphatase NUDT7 (236 aa).

Lysine 20 carries the post-translational modification N6-succinyllysine. A Nudix hydrolase domain is found at 37-169 (SNKFSVLVPL…QKQITQSGRD (133 aa)). The short motif at 77–98 (KRDPVDTDDTATALREAQEEVG) is the Nudix box element. Glutamate 92 and glutamate 96 together coordinate Mg(2+). At lysine 178 the chain carries N6-succinyllysine. The short motif at 234–236 (SKL) is the Microbody targeting signal element.

Belongs to the Nudix hydrolase family. PCD1 subfamily. In terms of assembly, monomer. Requires Mn(2+) as cofactor. Mg(2+) is required as a cofactor. Highly expressed in liver, brown adipose tissue and heart. Expressed at intermediate level in lung and kidney and at low level in brain. As to expression, expressed in liver, brown adipose tissue and heart at 20 times lower levels than isoform 1.

The protein localises to the peroxisome. The catalysed reaction is hexanoyl-CoA + H2O = hexanoyl-4'-phosphopantetheine + adenosine 3',5'-bisphosphate + 2 H(+). The enzyme catalyses octanoyl-CoA + H2O = S-octanoyl-4'-phosphopantetheine + adenosine 3',5'-bisphosphate + 2 H(+). It catalyses the reaction butanoyl-CoA + H2O = S-butanoyl-4'-phosphopantetheine + adenosine 3',5'-bisphosphate + 2 H(+). It carries out the reaction decanoyl-CoA + H2O = decanoyl-4'-phosphopantetheine + adenosine 3',5'-bisphosphate + 2 H(+). The catalysed reaction is dodecanoyl-CoA + H2O = S-dodecanoyl-4'-phosphopantetheine + adenosine 3',5'-bisphosphate + 2 H(+). The enzyme catalyses tetradecanoyl-CoA + H2O = tetradecanoyl-4'-phosphopantetheine + adenosine 3',5'-bisphosphate + 2 H(+). It catalyses the reaction choloyl-CoA + H2O = S-choloyl-4'-phosphopantetheine + adenosine 3',5'-bisphosphate + 2 H(+). It carries out the reaction 3alpha,7alpha,12alpha-trihydroxy-5beta-cholestan-26-oyl-CoA + H2O = 3alpha,7alpha,12alpha-trihydroxy-5beta-cholestan-26-oyl-4'-phosphopantetheine + adenosine 3',5'-bisphosphate + 2 H(+). The catalysed reaction is acetyl-CoA + H2O = S-acetyl-4'-phosphopantetheine + adenosine 3',5'-bisphosphate + 2 H(+). The enzyme catalyses CoA + H2O = (R)-4'-phosphopantetheine + adenosine 3',5'-bisphosphate + 2 H(+). It catalyses the reaction propanoyl-CoA + H2O = propanoyl-4'-phosphopantetheine + adenosine 3',5'-bisphosphate + 2 H(+). It carries out the reaction malonyl-CoA + H2O = malonyl-4'-phosphopantetheine + adenosine 3',5'-bisphosphate + 2 H(+). The catalysed reaction is succinyl-CoA + H2O = succinyl-4'-phosphopantetheine + adenosine 3',5'-bisphosphate + 2 H(+). The enzyme catalyses a 5'-end CoA-ribonucleoside in mRNA + H2O = a 5'-end phospho-adenosine-phospho-ribonucleoside in mRNA + (R)-4'-phosphopantetheine + 2 H(+). Its activity is regulated as follows. Inhibited by fluoride. Fatty acyl-coenzyme A (CoA) diphosphatase that hydrolyzes fatty acyl-CoA to yield acyl-4'-phosphopantetheine and adenosine 3',5'-bisphosphate. Cleaves CoA, CoA esters and oxidized CoA with similar efficiencies. Preferentially hydrolyzes medium-chain acyl-CoAs and bile acid-CoAs. Has no activity toward NDP-sugars, CDP-alcohols, (deoxy)nucleoside 5'-triphosphates, nucleoside 5'-di or monophosphates, diadenosine polyphosphates, NAD, NADH, NADP, NADPH or thymidine-5'-monophospho-p-nitrophenyl ester. May be required to eliminate oxidized CoA from peroxisomes, or regulate CoA and acyl-CoA levels in this organelle in response to metabolic demand. Does not play a role in U8 snoRNA decapping activity. Binds U8 snoRNA. Exhibits decapping activity towards dpCoA-capped RNAs in vitro. The chain is Peroxisomal coenzyme A diphosphatase NUDT7 from Mus musculus (Mouse).